A 649-amino-acid chain; its full sequence is DNA mismatch repair protein MutL (649 aa).

The protein belongs to the DNA mismatch repair MutL/HexB family.

In terms of biological role, this protein is involved in the repair of mismatches in DNA. It is required for dam-dependent methyl-directed DNA mismatch repair. May act as a 'molecular matchmaker', a protein that promotes the formation of a stable complex between two or more DNA-binding proteins in an ATP-dependent manner without itself being part of a final effector complex. The chain is DNA mismatch repair protein MutL from Streptococcus pneumoniae serotype 19F (strain G54).